A 287-amino-acid polypeptide reads, in one-letter code: Efem/EfeO family lipoprotein (287 aa).

The signal sequence occupies residues 1–17 (MKKLPTILLASSLLLAA). A lipid anchor (N-palmitoyl cysteine) is attached at cysteine 18. Cysteine 18 is lipidated: S-diacylglycerol cysteine. Residues 20 to 50 (NNSHSDDNSNKDKQSQSSKGENKASLQKATK) are disordered. Residues 23 to 33 (HSDDNSNKDKQ) show a composition bias toward basic and acidic residues.

It belongs to the EfeM/EfeO family.

It localises to the cell membrane. The chain is Efem/EfeO family lipoprotein from Staphylococcus haemolyticus (strain JCSC1435).